The chain runs to 444 residues: uncharacterized protein (444 aa).

The Radical SAM core domain maps to 164 to 381 (GAYGKSFLLE…EKALKKEGIR (218 aa)). Residues Cys-178, Cys-182, and Cys-185 each contribute to the [4Fe-4S] cluster site.

[4Fe-4S] cluster serves as cofactor.

This is an uncharacterized protein from Methanocaldococcus jannaschii (strain ATCC 43067 / DSM 2661 / JAL-1 / JCM 10045 / NBRC 100440) (Methanococcus jannaschii).